The sequence spans 246 residues: Isoprenyl transferase 1 (246 aa).

The active site involves Asp-19. A Mg(2+)-binding site is contributed by Asp-19. Residues 20 to 23 (GNGR), Trp-24, Arg-32, His-36, and 64 to 66 (STD) contribute to the substrate site. Asn-67 (proton acceptor) is an active-site residue. Residues Trp-68, Arg-70, Arg-180, and 186 to 188 (RLS) each bind substrate. Glu-199 is a binding site for Mg(2+).

It belongs to the UPP synthase family. Homodimer. Requires Mg(2+) as cofactor.

Functionally, catalyzes the condensation of isopentenyl diphosphate (IPP) with allylic pyrophosphates generating different type of terpenoids. The protein is Isoprenyl transferase 1 of Bradyrhizobium diazoefficiens (strain JCM 10833 / BCRC 13528 / IAM 13628 / NBRC 14792 / USDA 110).